A 263-amino-acid chain; its full sequence is Isatin hydrolase (263 aa).

A substrate-binding site is contributed by Phe-62 to Asn-66. His-73, His-77, and Asp-79 together coordinate Mn(2+). The active-site Proton donor/acceptor is His-83. His-212 is a binding site for substrate.

It belongs to the Cyclase 1 superfamily. In terms of assembly, homodimer. It depends on Mn(2+) as a cofactor.

It catalyses the reaction isatin + H2O = isatinate + H(+). Its activity is regulated as follows. Inhibited by thioisatinate. In terms of biological role, involved in the degradation of the plant hormone indole-3-acetic acid (IAA). Catalyzes the hydrolysis of the cyclic amide bond (lactam) of isatin (1H-indole-2,3-dione) to yield isatinate (2-(2-aminophenyl)-2-oxoacetate). In Roseibium aggregatum (strain ATCC 25650 / DSM 13394 / JCM 20685 / NBRC 16684 / NCIMB 2208 / IAM 12614 / B1) (Stappia aggregata), this protein is Isatin hydrolase.